A 484-amino-acid chain; its full sequence is Cobyric acid synthase (484 aa).

The GATase cobBQ-type domain occupies 253-430; sequence SLRVAVVRFP…WHGAFEHDEF (178 aa). The Nucleophile role is filled by Cys334. Residue His422 is part of the active site.

This sequence belongs to the CobB/CobQ family. CobQ subfamily.

It participates in cofactor biosynthesis; adenosylcobalamin biosynthesis. In terms of biological role, catalyzes amidations at positions B, D, E, and G on adenosylcobyrinic A,C-diamide. NH(2) groups are provided by glutamine, and one molecule of ATP is hydrogenolyzed for each amidation. This chain is Cobyric acid synthase, found in Cutibacterium acnes (strain DSM 16379 / KPA171202) (Propionibacterium acnes).